The primary structure comprises 84 residues: UPF0386 protein Oant_1614 (84 aa).

This sequence belongs to the UPF0386 family.

The polypeptide is UPF0386 protein Oant_1614 (Brucella anthropi (strain ATCC 49188 / DSM 6882 / CCUG 24695 / JCM 21032 / LMG 3331 / NBRC 15819 / NCTC 12168 / Alc 37) (Ochrobactrum anthropi)).